An 81-amino-acid chain; its full sequence is Photosystem I iron-sulfur center (81 aa).

4Fe-4S ferredoxin-type domains follow at residues 2–31 (SHSV…MVPW) and 39–68 (IASS…IRVY). [4Fe-4S] cluster-binding residues include Cys-11, Cys-14, Cys-17, Cys-21, Cys-48, Cys-51, Cys-54, and Cys-58.

In terms of assembly, the G.violaceus PSI reaction center is composed of one copy each of PsaA,B,C,D,E,F,L,M and Z, and forms trimeric complexes. It depends on [4Fe-4S] cluster as a cofactor.

The protein resides in the cell inner membrane. The catalysed reaction is reduced [plastocyanin] + hnu + oxidized [2Fe-2S]-[ferredoxin] = oxidized [plastocyanin] + reduced [2Fe-2S]-[ferredoxin]. Apoprotein for the two 4Fe-4S centers FA and FB of photosystem I (PSI); essential for photochemical activity. FB is the terminal electron acceptor of PSI, donating electrons to ferredoxin. The C-terminus interacts with PsaA/B/D and helps assemble the protein into the PSI complex. Required for binding of PsaD and PsaE to PSI. PSI is a plastocyanin/cytochrome c6-ferredoxin oxidoreductase, converting photonic excitation into a charge separation, which transfers an electron from the donor P700 chlorophyll pair to the spectroscopically characterized acceptors A0, A1, FX, FA and FB in turn. The protein is Photosystem I iron-sulfur center of Gloeobacter violaceus (strain ATCC 29082 / PCC 7421).